Here is a 389-residue protein sequence, read N- to C-terminus: Na(+)/H(+) antiporter NhaA (389 aa).

11 helical membrane-spanning segments follow: residues Ile-24–Ala-44, Leu-56–Leu-76, Leu-94–Leu-114, Ala-122–Leu-142, Val-152–Phe-172, Gln-176–Asn-196, Phe-216–Ile-236, Pro-259–Ser-279, Leu-291–Val-311, Trp-326–Ile-346, and Met-363–Phe-383.

This sequence belongs to the NhaA Na(+)/H(+) (TC 2.A.33) antiporter family.

The protein localises to the cell inner membrane. It carries out the reaction Na(+)(in) + 2 H(+)(out) = Na(+)(out) + 2 H(+)(in). Na(+)/H(+) antiporter that extrudes sodium in exchange for external protons. In Dechloromonas aromatica (strain RCB), this protein is Na(+)/H(+) antiporter NhaA.